The following is a 248-amino-acid chain: Ribosomal RNA small subunit methyltransferase J (248 aa).

S-adenosyl-L-methionine contacts are provided by residues 98 to 99 (RD), 114 to 115 (ER), 150 to 151 (SS), and Asp168.

This sequence belongs to the methyltransferase superfamily. RsmJ family.

The protein resides in the cytoplasm. It carries out the reaction guanosine(1516) in 16S rRNA + S-adenosyl-L-methionine = N(2)-methylguanosine(1516) in 16S rRNA + S-adenosyl-L-homocysteine + H(+). In terms of biological role, specifically methylates the guanosine in position 1516 of 16S rRNA. The chain is Ribosomal RNA small subunit methyltransferase J from Shewanella amazonensis (strain ATCC BAA-1098 / SB2B).